The primary structure comprises 453 residues: Bifunctional protein GlmU (453 aa).

Residues 1-225 form a pyrophosphorylase region; it reads MHAHVILAAG…AEEALGVNTR (225 aa). UDP-N-acetyl-alpha-D-glucosamine is bound by residues 7-10, K21, Q72, and 77-78; these read LAAG and GT. D102 provides a ligand contact to Mg(2+). G138, E152, N167, and N223 together coordinate UDP-N-acetyl-alpha-D-glucosamine. Residue N223 participates in Mg(2+) binding. Positions 226-246 are linker; sequence EELARVEGVLLRRLRAEWMGK. The tract at residues 247 to 453 is N-acetyltransferase; it reads GVRMILPETI…GYALRKLGEG (207 aa). R329 and K347 together coordinate UDP-N-acetyl-alpha-D-glucosamine. The active-site Proton acceptor is H359. Y362 and N373 together coordinate UDP-N-acetyl-alpha-D-glucosamine. Acetyl-CoA contacts are provided by residues A376, 382-383, S401, A419, and R436; that span reads NY.

It in the N-terminal section; belongs to the N-acetylglucosamine-1-phosphate uridyltransferase family. The protein in the C-terminal section; belongs to the transferase hexapeptide repeat family. As to quaternary structure, homotrimer. Requires Mg(2+) as cofactor.

It localises to the cytoplasm. It carries out the reaction alpha-D-glucosamine 1-phosphate + acetyl-CoA = N-acetyl-alpha-D-glucosamine 1-phosphate + CoA + H(+). The catalysed reaction is N-acetyl-alpha-D-glucosamine 1-phosphate + UTP + H(+) = UDP-N-acetyl-alpha-D-glucosamine + diphosphate. The protein operates within nucleotide-sugar biosynthesis; UDP-N-acetyl-alpha-D-glucosamine biosynthesis; N-acetyl-alpha-D-glucosamine 1-phosphate from alpha-D-glucosamine 6-phosphate (route II): step 2/2. It functions in the pathway nucleotide-sugar biosynthesis; UDP-N-acetyl-alpha-D-glucosamine biosynthesis; UDP-N-acetyl-alpha-D-glucosamine from N-acetyl-alpha-D-glucosamine 1-phosphate: step 1/1. It participates in bacterial outer membrane biogenesis; LPS lipid A biosynthesis. Catalyzes the last two sequential reactions in the de novo biosynthetic pathway for UDP-N-acetylglucosamine (UDP-GlcNAc). The C-terminal domain catalyzes the transfer of acetyl group from acetyl coenzyme A to glucosamine-1-phosphate (GlcN-1-P) to produce N-acetylglucosamine-1-phosphate (GlcNAc-1-P), which is converted into UDP-GlcNAc by the transfer of uridine 5-monophosphate (from uridine 5-triphosphate), a reaction catalyzed by the N-terminal domain. The chain is Bifunctional protein GlmU from Thermus thermophilus (strain ATCC BAA-163 / DSM 7039 / HB27).